The primary structure comprises 249 residues: Adenylate kinase (249 aa).

43–48 (GAGKGT) provides a ligand contact to ATP. Residues 63-92 (ATGDMLRAQVAAKTALGVEAKKIMDQGGLV) are NMP. Residues Thr64, Arg69, 90–92 (GLV), 119–122 (GFPR), and Gln126 contribute to the AMP site. Residues 160–197 (GRLVHPASGRSYHKLFNPPKKNMIDDITGEPLVQRSDD) form an LID region. ATP contacts are provided by residues Arg161 and 170 to 171 (SY). Positions 194 and 205 each coordinate AMP. Gln233 provides a ligand contact to ATP.

It belongs to the adenylate kinase family. AK2 subfamily. As to quaternary structure, monomer.

It localises to the cytoplasm. It is found in the cytosol. The protein resides in the mitochondrion intermembrane space. It catalyses the reaction AMP + ATP = 2 ADP. In terms of biological role, catalyzes the reversible transfer of the terminal phosphate group between ATP and AMP. Plays an important role in cellular energy homeostasis and in adenine nucleotide metabolism. Adenylate kinase activity is critical for regulation of the phosphate utilization and the AMP de novo biosynthesis pathways. The chain is Adenylate kinase from Scheffersomyces stipitis (strain ATCC 58785 / CBS 6054 / NBRC 10063 / NRRL Y-11545) (Yeast).